Here is a 126-residue protein sequence, read N- to C-terminus: RutC family protein PH0854 (126 aa).

It belongs to the RutC family.

This Pyrococcus horikoshii (strain ATCC 700860 / DSM 12428 / JCM 9974 / NBRC 100139 / OT-3) protein is RutC family protein PH0854.